Here is an 822-residue protein sequence, read N- to C-terminus: AP-1 complex subunit gamma-1 (822 aa).

The tract at residues 597–628 (EIVQTNGETEPAPLETKPPPSGPQPTSQANDL) is disordered. One can recognise a GAE domain in the interval 702–817 (AGIPSITAYS…QDLAEVNNFP (116 aa)).

The protein belongs to the adaptor complexes large subunit family. As to quaternary structure, adaptor protein complex 1 (AP-1) is a heterotetramer composed of two large adaptins (gamma-type subunit AP1G1 and beta-type subunit AP1B1), a medium adaptin (mu-type subunit AP1M1 or AP1M2) and a small adaptin (sigma-type subunit AP1S1 or AP1S2 or AP1S3). Interacts (via GAE domain) with RABEP1. Interacts with SYNRG/gamma-synergin. Interacts with EPS15. Interacts (via GAE domain) with AP1AR (via coiled-coil domain). Interacts with CLN3 (via dileucine motif); this interaction facilitates lysosomal targeting. Interacts (via GAE domain) with AFTPH/aftiphilin; the interaction is required to recruit AFTPH/aftiphilin to the perinuclear region of the cell. As to expression, widely expressed.

Its subcellular location is the golgi apparatus. It is found in the cytoplasmic vesicle. The protein localises to the clathrin-coated vesicle membrane. It localises to the cytoplasm. The protein resides in the perinuclear region. Its subcellular location is the clathrin-coated vesicle. It is found in the membrane. The protein localises to the clathrin-coated pit. Subunit of clathrin-associated adaptor protein complex 1 that plays a role in protein sorting in the late-Golgi/trans-Golgi network (TGN) and/or endosomes. The AP complexes mediate both the recruitment of clathrin to membranes and the recognition of sorting signals within the cytosolic tails of transmembrane cargo molecules. In association with AFTPH/aftiphilin in the aftiphilin/p200/gamma-synergin complex, involved in the trafficking of transferrin from early to recycling endosomes, and the membrane trafficking of furin and the lysosomal enzyme cathepsin D between the trans-Golgi network (TGN) and endosomes. The sequence is that of AP-1 complex subunit gamma-1 (AP1G1) from Homo sapiens (Human).